The sequence spans 393 residues: Elongation factor Tu (393 aa).

The region spanning 6–204 (KPHINVGTIG…ALEKIELPMR (199 aa)) is the tr-type G domain. The tract at residues 15 to 22 (GHVDHGKT) is G1. Residue 15-22 (GHVDHGKT) participates in GTP binding. Thr22 provides a ligand contact to Mg(2+). The G2 stretch occupies residues 58–62 (GITIS). The segment at 79 to 82 (DCPG) is G3. GTP contacts are provided by residues 79–83 (DCPGH) and 134–137 (NKCD). The interval 134–137 (NKCD) is G4. The G5 stretch occupies residues 172–174 (SAV).

Belongs to the TRAFAC class translation factor GTPase superfamily. Classic translation factor GTPase family. EF-Tu/EF-1A subfamily. In terms of assembly, monomer.

It is found in the cytoplasm. It catalyses the reaction GTP + H2O = GDP + phosphate + H(+). Functionally, GTP hydrolase that promotes the GTP-dependent binding of aminoacyl-tRNA to the A-site of ribosomes during protein biosynthesis. This Anaplasma phagocytophilum (strain HZ) protein is Elongation factor Tu.